A 715-amino-acid polypeptide reads, in one-letter code: MHMFEIHREEIEWAGRKLVLETGKIARQADGAIFATYGETTVLATVVSAKSVKPGVDFFPLTVNYQEKAFAAGRIPGGYFKREGRPSERETLVSRLIDRPIRPLFPEGYRNETQVIVTVLAHDLENDPDILSMVASSAALTLSGVPFMGPVGAARVAYVNGQYKINPTLDEVKDTALDLVVAGTSDAVLMVESEAKELSEDVMLGAVMAGHSSFQPVIDAIIRLAEKAAKEPRDLILPDKTEVEVAVLAIAENDLREAYKITSKQDRYAAVDAVKAKVFGDLLPAEGEAKFPKDLVAEVFHDLQAKVVRWNILDNGIRIDGRDVKTVRPILAEVGILPRAHGSALFTRGETQALVVATLGTGEDEQLIDNLEGTYRERFLLHYNFPPYSVGEAGRMGSPGRREIGHGKLAWRAIHPMLPTPAEFPYTIRVVSEITESNGSSSMATVCGSSLALMDAGVPLKRPTAGIAMGLILEGERYAVLSDILGDEDHLGDMDFKVAGTEEGITSLQMDIKITGINEEIMRVALGQAKEGRLHILGEMAKAITGARAELGEFAPRIETLRIPTEKIREVIGTGGKVIREICEKTGAKINIEDDGTVKVASSDGNSIKAAINWIKSIATDPEVGHIYDGTVVKVVDFGAFVNFFGSKDGLVHISQLAKGRVAKTSDVVKEGDKVKVKLLGFDDRGKVRLSMRLVDQETGEDLEGKEPPQAEAGE.

The Mg(2+) site is built by Asp489 and Asp495. The KH domain maps to 556-615 (PRIETLRIPTEKIREVIGTGGKVIREICEKTGAKINIEDDGTVKVASSDGNSIKAAINWI). Residues 625-693 (GHIYDGTVVK…DRGKVRLSMR (69 aa)) form the S1 motif domain.

Belongs to the polyribonucleotide nucleotidyltransferase family. The cofactor is Mg(2+).

The protein localises to the cytoplasm. It catalyses the reaction RNA(n+1) + phosphate = RNA(n) + a ribonucleoside 5'-diphosphate. Involved in mRNA degradation. Catalyzes the phosphorolysis of single-stranded polyribonucleotides processively in the 3'- to 5'-direction. The chain is Polyribonucleotide nucleotidyltransferase from Beijerinckia indica subsp. indica (strain ATCC 9039 / DSM 1715 / NCIMB 8712).